The chain runs to 279 residues: NADPH-dependent 7-cyano-7-deazaguanine reductase (279 aa).

86–88 is a substrate binding site; the sequence is IES. Residue 88–89 participates in NADPH binding; that stretch reads SK. Cys187 (thioimide intermediate) is an active-site residue. Asp194 (proton donor) is an active-site residue. 226–227 contributes to the substrate binding site; sequence HE. NADPH is bound at residue 255 to 256; the sequence is RG.

The protein belongs to the GTP cyclohydrolase I family. QueF type 2 subfamily. Homodimer.

The protein localises to the cytoplasm. It catalyses the reaction 7-aminomethyl-7-carbaguanine + 2 NADP(+) = 7-cyano-7-deazaguanine + 2 NADPH + 3 H(+). Its pathway is tRNA modification; tRNA-queuosine biosynthesis. In terms of biological role, catalyzes the NADPH-dependent reduction of 7-cyano-7-deazaguanine (preQ0) to 7-aminomethyl-7-deazaguanine (preQ1). The polypeptide is NADPH-dependent 7-cyano-7-deazaguanine reductase (Haemophilus ducreyi (strain 35000HP / ATCC 700724)).